A 734-amino-acid polypeptide reads, in one-letter code: Photosystem I P700 chlorophyll a apoprotein A2 (734 aa).

Helical transmembrane passes span 46–69 (IFASHFGQLAIIFLWTSGNLFHVA), 135–158 (LYTGALFLLFLSAISLIAGRFHLQ), 175–199 (LDHHLSGLFGVSSLAWTGHLVHVAI), 273–291 (IAHHHLAIAFVFFIAGHMY), 330–353 (LHFQLGLALASLGVITSLVAQHMY), 369–395 (AALYTHHQYIAGFIMTGAFAHGAIFFI), 417–439 (AIISHLSWASLFLGFHTLGLYVH), and 517–535 (FLVHHAIALGLHTTTLILV). The [4Fe-4S] cluster site is built by Cys-559 and Cys-568. The next 2 helical transmembrane spans lie at 575–596 (AFYLAVFWMLNTIGWVTFYWHW) and 643–665 (LSVWAWMFLFGHLVWATGFMFLI). Positions 654, 662, and 670 each coordinate chlorophyll a. Trp-671 serves as a coordination point for phylloquinone. A helical membrane pass occupies residues 707–727 (LVGLAHFSVGYIFTYAAFLIA).

The protein belongs to the PsaA/PsaB family. As to quaternary structure, the PsaA/B heterodimer binds the P700 chlorophyll special pair and subsequent electron acceptors. PSI consists of a core antenna complex that captures photons, and an electron transfer chain that converts photonic excitation into a charge separation. The eukaryotic PSI reaction center is composed of at least 11 subunits. Requires P700 is a chlorophyll a/chlorophyll a' dimer, A0 is one or more chlorophyll a, A1 is one or both phylloquinones and FX is a shared 4Fe-4S iron-sulfur center. as cofactor.

It localises to the plastid. It is found in the chloroplast thylakoid membrane. It catalyses the reaction reduced [plastocyanin] + hnu + oxidized [2Fe-2S]-[ferredoxin] = oxidized [plastocyanin] + reduced [2Fe-2S]-[ferredoxin]. Functionally, psaA and PsaB bind P700, the primary electron donor of photosystem I (PSI), as well as the electron acceptors A0, A1 and FX. PSI is a plastocyanin-ferredoxin oxidoreductase, converting photonic excitation into a charge separation, which transfers an electron from the donor P700 chlorophyll pair to the spectroscopically characterized acceptors A0, A1, FX, FA and FB in turn. Oxidized P700 is reduced on the lumenal side of the thylakoid membrane by plastocyanin. This chain is Photosystem I P700 chlorophyll a apoprotein A2, found in Cycas taitungensis (Prince sago).